The following is a 411-amino-acid chain: LL-diaminopimelate aminotransferase (411 aa).

Substrate is bound by residues Tyr15 and Gly42. Residues Tyr72, 108–109 (SK), Tyr132, Asn187, Tyr218, and 246–248 (SFS) contribute to the pyridoxal 5'-phosphate site. Residues Lys109, Tyr132, and Asn187 each coordinate substrate. Position 249 is an N6-(pyridoxal phosphate)lysine (Lys249). The pyridoxal 5'-phosphate site is built by Arg257 and Asn292. The substrate site is built by Asn292 and Arg388.

This sequence belongs to the class-I pyridoxal-phosphate-dependent aminotransferase family. LL-diaminopimelate aminotransferase subfamily. As to quaternary structure, homodimer. Pyridoxal 5'-phosphate is required as a cofactor.

The catalysed reaction is (2S,6S)-2,6-diaminopimelate + 2-oxoglutarate = (S)-2,3,4,5-tetrahydrodipicolinate + L-glutamate + H2O + H(+). The protein operates within amino-acid biosynthesis; L-lysine biosynthesis via DAP pathway; LL-2,6-diaminopimelate from (S)-tetrahydrodipicolinate (aminotransferase route): step 1/1. In terms of biological role, involved in the synthesis of meso-diaminopimelate (m-DAP or DL-DAP), required for both lysine and peptidoglycan biosynthesis. Catalyzes the direct conversion of tetrahydrodipicolinate to LL-diaminopimelate. The protein is LL-diaminopimelate aminotransferase of Synechococcus elongatus (strain ATCC 33912 / PCC 7942 / FACHB-805) (Anacystis nidulans R2).